Here is a 173-residue protein sequence, read N- to C-terminus: Protein SHI RELATED SEQUENCE 8 (173 aa).

The Zn(2+) site is built by Cys-52, Cys-63, Cys-68, Cys-72, and Cys-79. The zn(2)-C6 fungal-type; degenerate DNA-binding region spans 52 to 79 (CQDFGNQAKKDCSHMRCRTCCKSRGFEC). Residues 100 to 110 (LATVQPQTQLP) show a composition bias toward low complexity. A disordered region spans residues 100–121 (LATVQPQTQLPRGESVPKRHRE).

It belongs to the SHI protein family.

It localises to the nucleus. Functionally, transcription activator that binds DNA on 5'-ACTCTAC-3' and promotes auxin homeostasis-regulating gene expression (e.g. YUC genes), as well as genes affecting stamen development, cell expansion and timing of flowering. Synergistically with other SHI-related proteins, regulates gynoecium, stamen and leaf development in a dose-dependent manner, controlling apical-basal patterning. Promotes style and stigma formation, and influence vascular development during gynoecium development. May also have a role in the formation and/or maintenance of the shoot apical meristem (SAM). This is Protein SHI RELATED SEQUENCE 8 (SRS8) from Arabidopsis thaliana (Mouse-ear cress).